A 357-amino-acid polypeptide reads, in one-letter code: Peptide chain release factor 1 (357 aa).

Position 233 is an N5-methylglutamine (glutamine 233). The disordered stretch occupies residues arginine 284–isoleucine 305.

Belongs to the prokaryotic/mitochondrial release factor family. In terms of processing, methylated by PrmC. Methylation increases the termination efficiency of RF1.

The protein localises to the cytoplasm. In terms of biological role, peptide chain release factor 1 directs the termination of translation in response to the peptide chain termination codons UAG and UAA. The protein is Peptide chain release factor 1 of Clostridium novyi (strain NT).